The following is a 75-amino-acid chain: Tetrahydromethanopterin S-methyltransferase subunit F (75 aa).

The chain crosses the membrane as a helical span at residues 53 to 73; sequence FAGLACGMVFAGVLLVPLLLL.

This sequence belongs to the MtrF family. The complex is composed of 8 subunits; MtrA, MtrB, MtrC, MtrD, MtrE, MtrF, MtrG and MtrH.

The protein localises to the cell membrane. The catalysed reaction is 5-methyl-5,6,7,8-tetrahydromethanopterin + coenzyme M + 2 Na(+)(in) = 5,6,7,8-tetrahydromethanopterin + methyl-coenzyme M + 2 Na(+)(out). Its pathway is one-carbon metabolism; methanogenesis from CO(2); methyl-coenzyme M from 5,10-methylene-5,6,7,8-tetrahydromethanopterin: step 2/2. Its function is as follows. Part of a complex that catalyzes the formation of methyl-coenzyme M and tetrahydromethanopterin from coenzyme M and methyl-tetrahydromethanopterin. This is an energy-conserving, sodium-ion translocating step. The protein is Tetrahydromethanopterin S-methyltransferase subunit F of Methanopyrus kandleri (strain AV19 / DSM 6324 / JCM 9639 / NBRC 100938).